Here is a 439-residue protein sequence, read N- to C-terminus: Leukocyte immunoglobulin-like receptor subfamily A member 3 (439 aa).

The signal sequence occupies residues 1-23; it reads MTPILTVLICLGLSLDPRTHVQA. 4 Ig-like C2-type domains span residues 27–108, 119–224, 226–315, and 326–415; these read PKPT…AGLS, TGAY…GVSK, PSLS…DPLD, and PFLS…SDPL. Cysteines 49 and 98 form a disulfide. N-linked (GlcNAc...) asparagine glycosylation is present at asparagine 140. Cystine bridges form between cysteine 145–cysteine 197, cysteine 157–cysteine 167, and cysteine 246–cysteine 297. N-linked (GlcNAc...) asparagine glycosylation is found at asparagine 281, asparagine 302, and asparagine 341. Cysteine 346 and cysteine 397 are oxidised to a cystine. A glycan (N-linked (GlcNAc...) asparagine) is linked at asparagine 431.

In terms of processing, N-glycosylation is required for ligand binding. In terms of tissue distribution, detected in B-cells, and at lower levels in natural killer (NK) cells. Detected in peripheral blood monocytes and lung.

It is found in the secreted. In terms of biological role, acts as a soluble receptor for class I MHC antigens. Binds both classical and non-classical HLA class I molecules but with reduced affinities compared to LILRB1 or LILRB2. Binds with high affinity to the surface of monocytes, leading to abolish LPS-induced TNF-alpha production by monocytes. This is Leukocyte immunoglobulin-like receptor subfamily A member 3 (LILRA3) from Homo sapiens (Human).